The sequence spans 156 residues: Ribosomal RNA large subunit methyltransferase H (156 aa).

S-adenosyl-L-methionine-binding positions include Leu-73, Gly-104, and 123 to 128 (IGPLTL).

It belongs to the RNA methyltransferase RlmH family. Homodimer.

The protein resides in the cytoplasm. The catalysed reaction is pseudouridine(1915) in 23S rRNA + S-adenosyl-L-methionine = N(3)-methylpseudouridine(1915) in 23S rRNA + S-adenosyl-L-homocysteine + H(+). In terms of biological role, specifically methylates the pseudouridine at position 1915 (m3Psi1915) in 23S rRNA. This chain is Ribosomal RNA large subunit methyltransferase H, found in Xanthomonas oryzae pv. oryzae (strain MAFF 311018).